The primary structure comprises 127 residues: Glycine cleavage system H protein (127 aa).

The Lipoyl-binding domain maps to 27–109 (TVRVGITHIA…YGEGWLYEVK (83 aa)). Residue lysine 68 is modified to N6-lipoyllysine.

It belongs to the GcvH family. In terms of assembly, the glycine cleavage system is composed of four proteins: P, T, L and H. It depends on (R)-lipoate as a cofactor.

Its function is as follows. The glycine cleavage system catalyzes the degradation of glycine. The H protein shuttles the methylamine group of glycine from the P protein to the T protein. This chain is Glycine cleavage system H protein, found in Corynebacterium jeikeium (strain K411).